Here is a 174-residue protein sequence, read N- to C-terminus: Protein C2-DOMAIN ABA-RELATED 6 (174 aa).

Residues 1-115 form the C2 domain; it reads MEKTEEEVEM…HKLGLKELPH (115 aa). Ca(2+)-binding residues include arginine 30, aspartate 31, aspartate 36, aspartate 82, lysine 83, aspartate 84, and aspartate 90.

It belongs to the plant CAR protein family. As to quaternary structure, binds to PYR/PYL/RCAR abscisic acid intracellular receptors in an ABA-independent manner, both at the plasma membrane and in the nucleus. Subunit of a complex made of CAR6, PHOT1 and RPT3/NPH3. Interacts directly with RPT3/NPH3.

Its subcellular location is the cell membrane. It localises to the nucleus. Functionally, stimulates the GTPase/ATPase activities of Obg-like ATPases. Mediates the transient calcium-dependent interaction of PYR/PYL/RCAR abscisic acid (ABA) receptors with the plasma membrane and thus regulates ABA sensitivity. Prevents hypocotyl bending as well as gravitropic response under blue light conditions. The protein is Protein C2-DOMAIN ABA-RELATED 6 of Arabidopsis thaliana (Mouse-ear cress).